Here is a 119-residue protein sequence, read N- to C-terminus: Ig heavy chain V region X44 (119 aa).

The Ig-like domain occupies 1 to 117; the sequence is EVKLLESGGG…WGQGTLVTVS (117 aa).

The chain is Ig heavy chain V region X44 from Mus musculus (Mouse).